We begin with the raw amino-acid sequence, 220 residues long: Aspartic protease inhibitor 4 (220 aa).

Residues 1-23 form the signal peptide; that stretch reads MMKCLFLLCLCLLPILVFSSTFT. The propeptide occupies 24–32; that stretch reads SQNPINLPS. A Vacuolar targeting signal motif is present at residues 26–31; the sequence is NPINLP. N-linked (GlcNAc...) asparagine glycosylation is present at Asn-51. Cystine bridges form between Cys-80–Cys-125 and Cys-174–Cys-185.

The protein belongs to the protease inhibitor I3 (leguminous Kunitz-type inhibitor) family. Tubers.

The protein localises to the vacuole. Its function is as follows. Inhibits tightly cathepsin D (aspartic protease) and weakly trypsin (serine protease). May protect the plant by inhibiting proteases of invading organisms. In Solanum tuberosum (Potato), this protein is Aspartic protease inhibitor 4.